Reading from the N-terminus, the 325-residue chain is Putative gluconeogenesis factor (325 aa).

It belongs to the gluconeogenesis factor family.

The protein resides in the cytoplasm. Its function is as follows. Required for morphogenesis under gluconeogenic growth conditions. The sequence is that of Putative gluconeogenesis factor from Streptococcus pyogenes serotype M3 (strain ATCC BAA-595 / MGAS315).